The chain runs to 1340 residues: Serine/threonine-protein phosphatase 7 long form homolog (1340 aa).

Asp-660 and His-662 together coordinate Mn(2+). His-722 functions as the Proton donor in the catalytic mechanism. His-773 is a binding site for Mn(2+). 4 disordered regions span residues 788–814 (QERN…DRSE), 1012–1093 (KSMD…SRTR), 1196–1218 (TDGA…SEDI), and 1266–1340 (FTNL…DMDS). Residues 790 to 799 (RNRKRKRTQK) show a composition bias toward basic residues. Residues 1018 to 1027 (EQMEVDEKDD) show a composition bias toward acidic residues. Basic and acidic residues predominate over residues 1049–1080 (GDRDMVDFSDKTENGSKEADHSETAEISKDLS). Residues 1203–1213 (EPSTSKLNYSE) are compositionally biased toward polar residues. Basic and acidic residues-rich tracts occupy residues 1266–1289 (FTNL…ERVI) and 1318–1328 (DSVDSKNKGSL).

Belongs to the PPP phosphatase family. PP-7 subfamily. Mn(2+) is required as a cofactor. As to expression, expressed in root tips, the shoot apical meristem (SAM), leaf vasculature, hydathodes and mature flowers.

It localises to the nucleus. It carries out the reaction O-phospho-L-seryl-[protein] + H2O = L-seryl-[protein] + phosphate. It catalyses the reaction O-phospho-L-threonyl-[protein] + H2O = L-threonyl-[protein] + phosphate. In terms of biological role, maybe required to maintain cell division activity in meristematic cells. This Arabidopsis thaliana (Mouse-ear cress) protein is Serine/threonine-protein phosphatase 7 long form homolog.